A 406-amino-acid polypeptide reads, in one-letter code: Probable endo-xylogalacturonan hydrolase A (406 aa).

The N-terminal stretch at 1–18 (MISLNSIFLLSLVGLSRA) is a signal peptide. Residues 20 to 49 (PSRSETSPDRTIKPRAACTPTAGGSSSTDD) form a disordered region. PbH1 repeat units lie at residues 183-213 (TSNA…DIGA), 214-235 (STYV…AFKP), 237-257 (ANYV…SVGS), 266-289 (VQNV…KTYP), 299-320 (VKNA…QIQS), and 368-390 (TCDV…ILCG). D228 acts as the Proton donor in catalysis. N244 is a glycosylation site (N-linked (GlcNAc...) asparagine). H251 is a catalytic residue. 3 N-linked (GlcNAc...) asparagine glycosylation sites follow: N273, N278, and N301.

The protein belongs to the glycosyl hydrolase 28 family.

The protein localises to the secreted. Pectinolytic enzyme involved in the degradation of xylogalacturonan (xga), a galacturonan backbone heavily substituted with xylose, and which is one important component of the hairy regions of pectin. Activity requires a galacturonic acid backbone substituted with xylose. The sequence is that of Probable endo-xylogalacturonan hydrolase A (xghA) from Aspergillus flavus (strain ATCC 200026 / FGSC A1120 / IAM 13836 / NRRL 3357 / JCM 12722 / SRRC 167).